The primary structure comprises 163 residues: Phosphopantetheine adenylyltransferase (163 aa).

Substrate is bound at residue serine 10. ATP-binding positions include 10–11 (SF) and histidine 18. Residues lysine 42, leucine 78, and lysine 92 each coordinate substrate. ATP is bound by residues 93–95 (GVR), glutamate 103, and 127–133 (HAHVSSS).

This sequence belongs to the bacterial CoaD family. As to quaternary structure, homohexamer. Mg(2+) is required as a cofactor.

It is found in the cytoplasm. The catalysed reaction is (R)-4'-phosphopantetheine + ATP + H(+) = 3'-dephospho-CoA + diphosphate. It participates in cofactor biosynthesis; coenzyme A biosynthesis; CoA from (R)-pantothenate: step 4/5. Functionally, reversibly transfers an adenylyl group from ATP to 4'-phosphopantetheine, yielding dephospho-CoA (dPCoA) and pyrophosphate. The protein is Phosphopantetheine adenylyltransferase of Clavibacter michiganensis subsp. michiganensis (strain NCPPB 382).